A 1050-amino-acid polypeptide reads, in one-letter code: ATP-dependent DNA helicase MPH1 (1050 aa).

A Helicase ATP-binding domain is found at isoleucine 95–lysine 262. An ATP-binding site is contributed by leucine 108 to threonine 115. Positions aspartate 210–histidine 213 match the DEAH box motif. In terms of domain architecture, Helicase C-terminal spans lysine 431 to methionine 631. Disordered stretches follow at residues aspartate 493–asparagine 524 and aspartate 743–arginine 821. The span at lysine 499–lysine 508 shows a compositional bias: basic residues. A compositionally biased stretch (basic and acidic residues) spans arginine 786 to glycine 799. The span at isoleucine 800–leucine 810 shows a compositional bias: polar residues.

It belongs to the DEAD box helicase family. DEAH subfamily. FANCM sub-subfamily. In terms of assembly, interacts with the MHF histone-fold complex to form the FANCM-MHF complex.

It is found in the nucleus. The catalysed reaction is ATP + H2O = ADP + phosphate + H(+). Functionally, ATP-dependent DNA helicase involved in DNA damage repair by homologous recombination and in genome maintenance. Capable of unwinding D-loops. Plays a role in limiting crossover recombinants during mitotic DNA double-strand break (DSB) repair. Component of a FANCM-MHF complex which promotes gene conversion at blocked replication forks, probably by reversal of the stalled fork. This is ATP-dependent DNA helicase MPH1 from Scheffersomyces stipitis (strain ATCC 58785 / CBS 6054 / NBRC 10063 / NRRL Y-11545) (Yeast).